We begin with the raw amino-acid sequence, 44 residues long: Tachystatin-A1 (44 aa).

3 disulfides stabilise this stretch: Cys4/Cys24, Cys11/Cys29, and Cys23/Cys41.

In terms of tissue distribution, granular hemocytes, small secretory granules.

It localises to the secreted. Exhibits stronger antimicrobial activity against the Gram-positive bacteria (S.aureus (IC(50) is 4.2 ug/ml)) and fungi (C.albicans (IC(50) is 3.0 ug/ml) and P.pastoris (IC(50) is 0.5 ug/ml)) than Gram-negative bacteria (E.coli (IC(50) is 25 ug/ml)). Binds to chitin (8.4 uM are required to obtain 50% of binding). Does not cause hemolysis on sheep erythrocytes. Has no blocking activity on the P-type calcium channel. In Tachypleus tridentatus (Japanese horseshoe crab), this protein is Tachystatin-A1.